The following is a 204-amino-acid chain: Thymidylate kinase (204 aa).

11 to 18 (GLDKSGKT) lines the ATP pocket.

This sequence belongs to the thymidylate kinase family.

It carries out the reaction dTMP + ATP = dTDP + ADP. The protein operates within pyrimidine metabolism; dTTP biosynthesis. This is Thymidylate kinase (TMK) from Bos taurus (Bovine).